The primary structure comprises 472 residues: Probable diguanylate cyclase DgcF (472 aa).

8 consecutive transmembrane segments (helical) span residues 21-41, 44-64, 90-110, 128-148, 167-187, 198-218, 237-257, and 273-293; these read SIAI…LRLV, LSLF…YVWL, VSLA…LLVV, LFNY…IGSV, FSTG…GVLP, IALI…SLAF, LLTF…VIDI, and LGIA…AAIN. Positions 330–467 constitute a GGDEF domain; it reads QHLTVMLLDI…GRNRTSTMRY (138 aa). Mg(2+)-binding residues include aspartate 338 and isoleucine 339. Substrate contacts are provided by asparagine 346, histidine 351, and aspartate 355. Residue glutamate 381 coordinates Mg(2+).

As to quaternary structure, homodimer. The cofactor is Mg(2+).

The protein localises to the cell membrane. The catalysed reaction is 2 GTP = 3',3'-c-di-GMP + 2 diphosphate. It participates in purine metabolism; 3',5'-cyclic di-GMP biosynthesis. Functionally, catalyzes the synthesis of cyclic-di-GMP (c-di-GMP) via the condensation of 2 GTP molecules. In Escherichia coli O157:H7, this protein is Probable diguanylate cyclase DgcF.